A 325-amino-acid polypeptide reads, in one-letter code: Phospho-N-acetylmuramoyl-pentapeptide-transferase (325 aa).

Helical transmembrane passes span 7–27, 57–77, 81–101, 122–142, 146–166, 186–206, 227–247, 252–272, and 302–322; these read LFVL…FIPF, IVIV…ITGF, LLLL…DDYL, VIAA…FIAI, TFGF…LLGA, IAFG…TALF, VFMG…IAIL, LMLI…IIQV, and VVVT…YIGV.

It belongs to the glycosyltransferase 4 family. MraY subfamily. Mg(2+) is required as a cofactor.

The protein localises to the cell membrane. It carries out the reaction UDP-N-acetyl-alpha-D-muramoyl-L-alanyl-gamma-D-glutamyl-meso-2,6-diaminopimeloyl-D-alanyl-D-alanine + di-trans,octa-cis-undecaprenyl phosphate = di-trans,octa-cis-undecaprenyl diphospho-N-acetyl-alpha-D-muramoyl-L-alanyl-D-glutamyl-meso-2,6-diaminopimeloyl-D-alanyl-D-alanine + UMP. It functions in the pathway cell wall biogenesis; peptidoglycan biosynthesis. Catalyzes the initial step of the lipid cycle reactions in the biosynthesis of the cell wall peptidoglycan: transfers peptidoglycan precursor phospho-MurNAc-pentapeptide from UDP-MurNAc-pentapeptide onto the lipid carrier undecaprenyl phosphate, yielding undecaprenyl-pyrophosphoryl-MurNAc-pentapeptide, known as lipid I. This chain is Phospho-N-acetylmuramoyl-pentapeptide-transferase, found in Shouchella clausii (strain KSM-K16) (Alkalihalobacillus clausii).